The sequence spans 307 residues: Taste receptor type 2 member 106 (307 aa).

The Extracellular segment spans residues 1 to 7; that stretch reads MLTIPEG. The chain crosses the membrane as a helical span at residues 8-28; it reads ILLCFITSGSVLGVLGNGFIL. Residues 29 to 41 are Cytoplasmic-facing; sequence HVNCTDCVRQKFS. A helical membrane pass occupies residues 42 to 62; sequence TTGFIFTGLAISRICVICIII. Topologically, residues 63-81 are extracellular; sequence SDGYLKLFSPHMVASDAHI. The chain crosses the membrane as a helical span at residues 82–104; sequence IGISYLWIITNHTSTCFATILNL. The Cytoplasmic portion of the chain corresponds to 105–124; that stretch reads FYFLKIANFSHYIFFCLKRK. Residues 125–145 traverse the membrane as a helical segment; it reads LNTIFIFLLGCLFISWSVAFP. The Extracellular portion of the chain corresponds to 146–179; it reads QTVKIFNDKMKHRNTSWKFHLHKSKFIINHILLN. An N-linked (GlcNAc...) asparagine glycan is attached at N159. The chain crosses the membrane as a helical span at residues 180-200; the sequence is LGVIFFCMVAIITSFLLIISL. The Cytoplasmic portion of the chain corresponds to 201-227; that stretch reads WKHNRKMQLYVSRFKSLNTEVHLKVMK. The helical transmembrane segment at 228–248 threads the bilayer; that stretch reads VLISFIILLILHVIGILIETL. The Extracellular segment spans residues 249-257; it reads SFLRYENKL. A helical membrane pass occupies residues 258–278; it reads LLILGLNFSSMYPCCHSFILI. Over 279 to 307 the chain is Cytoplasmic; the sequence is LANNQLKQASLKALKQFKCHKKDKDVRET.

The protein belongs to the G-protein coupled receptor T2R family.

The protein localises to the membrane. Its function is as follows. Putative taste receptor which may play a role in the perception of bitterness. In Rattus norvegicus (Rat), this protein is Taste receptor type 2 member 106.